Here is a 413-residue protein sequence, read N- to C-terminus: Terephthalate 1,2-dioxygenase, terminal oxygenase component subunit alpha 2 (413 aa).

A Rieske domain is found at 41–144 (NYLCLESEIP…CKEEHGPRKL (104 aa)). The [2Fe-2S] cluster site is built by C82, H84, C102, and H105.

Belongs to the bacterial ring-hydroxylating dioxygenase alpha subunit family. In terms of assembly, heterotetramer composed of 2 alpha (TphA2I and TphA2II) and 2 beta (TphA3I and TphA3II) subunits. Part of a multicomponent enzyme system composed of a reductase (TphA1I or TphA1II) and a two-subunit oxygenase component (TphA2I or TphA2II and TphA3I or TphA3II). It depends on Fe cation as a cofactor. Requires [2Fe-2S] cluster as cofactor.

The catalysed reaction is terephthalate + NADH + O2 + H(+) = (3S,4R)-3,4-dihydroxycyclohexa-1,5-diene-1,4-dicarboxylate + NAD(+). With respect to regulation, inhibited by EDTA. Component of the terephthalate 1,2-dioxygenase multicomponent enzyme system which catalyzes the dioxygenation of terephthalate (TER/TPA) to 1,2-dihydroxy-3,5-cyclohexadiene-1,4-dicarboxylic acid (DCD). It can also use 2,5-dicarboxypyridine (PDC) and 1,4-napthalenedicarboxylic acid (NDC) as substrates, and preferentially uses NADPH which is the physiological electron donor. The sequence is that of Terephthalate 1,2-dioxygenase, terminal oxygenase component subunit alpha 2 (tphA2II) from Comamonas sp.